The primary structure comprises 782 residues: Ribosome biogenesis protein ERB1 (782 aa).

Disordered stretches follow at residues 1–123 (MGSK…RIEK) and 339–361 (PEEY…EDRE). Residues 35–86 (SEDEEDYLPSDDDDDVEDSENEGTGASEDDDDDDDDDDILSDDIPSDVDSEE) show a composition bias toward acidic residues. Basic and acidic residues predominate over residues 105–123 (VDPKREEDDGADRNYRIEK). 7 WD repeats span residues 433–472 (GHEG…QVWS), 476–516 (NSEE…VTPA), 567–609 (TVRS…TQIP), 612–650 (KLSG…LVKV), 653–692 (PGAK…RPYK), 696–736 (FHGQ…DQLE), and 752–782 (VSKL…RLWM).

The protein belongs to the WD repeat BOP1/ERB1 family. In terms of assembly, component of the NOP7 complex, composed of ERB1, NOP7 and YTM1. The complex is held together by ERB1, which interacts with NOP7 via its N-terminal domain and with YTM1 via a high-affinity interaction between the seven-bladed beta-propeller domains of the 2 proteins. The NOP7 complex associates with the 66S pre-ribosome.

It localises to the nucleus. The protein resides in the nucleolus. It is found in the nucleoplasm. In terms of biological role, component of the NOP7 complex, which is required for maturation of the 25S and 5.8S ribosomal RNAs and formation of the 60S ribosome. The polypeptide is Ribosome biogenesis protein ERB1 (Chaetomium globosum (strain ATCC 6205 / CBS 148.51 / DSM 1962 / NBRC 6347 / NRRL 1970) (Soil fungus)).